We begin with the raw amino-acid sequence, 299 residues long: tRNA dimethylallyltransferase (299 aa).

11–18 contacts ATP; it reads GPTAVGKT. 13-18 is a binding site for substrate; sequence TAVGKT. The interval 36 to 39 is interaction with substrate tRNA; it reads DSQQ.

This sequence belongs to the IPP transferase family. As to quaternary structure, monomer. Mg(2+) is required as a cofactor.

It carries out the reaction adenosine(37) in tRNA + dimethylallyl diphosphate = N(6)-dimethylallyladenosine(37) in tRNA + diphosphate. In terms of biological role, catalyzes the transfer of a dimethylallyl group onto the adenine at position 37 in tRNAs that read codons beginning with uridine, leading to the formation of N6-(dimethylallyl)adenosine (i(6)A). In Streptococcus pyogenes serotype M28 (strain MGAS6180), this protein is tRNA dimethylallyltransferase.